A 370-amino-acid polypeptide reads, in one-letter code: Phosphoserine aminotransferase (370 aa).

Residue methionine 1 is modified to N-acetylmethionine. Histidine 44 and arginine 45 together coordinate O-phospho-L-serine. An N6-acetyllysine modification is found at lysine 51. Residues glycine 79 and tryptophan 107 each coordinate pyridoxal 5'-phosphate. Lysine 127 carries the N6-acetyllysine modification. Positions 156, 176, and 199 each coordinate pyridoxal 5'-phosphate. Lysine 200 carries the N6-(pyridoxal phosphate)lysine modification. Pyridoxal 5'-phosphate contacts are provided by asparagine 241 and threonine 242. Residues lysine 269, lysine 318, and lysine 323 each carry the N6-acetyllysine modification. Serine 331 carries the phosphoserine modification. N6-acetyllysine is present on lysine 333. 3 residues coordinate O-phospho-L-serine: histidine 335, arginine 336, and arginine 342.

It belongs to the class-V pyridoxal-phosphate-dependent aminotransferase family. SerC subfamily. In terms of assembly, homodimer. Requires pyridoxal 5'-phosphate as cofactor.

It carries out the reaction O-phospho-L-serine + 2-oxoglutarate = 3-phosphooxypyruvate + L-glutamate. It functions in the pathway amino-acid biosynthesis; L-serine biosynthesis; L-serine from 3-phospho-D-glycerate: step 2/3. In terms of biological role, involved in L-serine biosynthesis via the phosphorylated pathway, a three-step pathway converting the glycolytic intermediate 3-phospho-D-glycerate into L-serine. Catalyzes the second step, that is the pyridoxal 5'-phosphate-dependent transamination of 3-phosphohydroxypyruvate and L-glutamate to O-phosphoserine (OPS) and alpha-ketoglutarate. The protein is Phosphoserine aminotransferase of Mus musculus (Mouse).